We begin with the raw amino-acid sequence, 349 residues long: UDP-3-O-acylglucosamine N-acyltransferase (349 aa).

Catalysis depends on His-246, which acts as the Proton acceptor.

Belongs to the transferase hexapeptide repeat family. LpxD subfamily. As to quaternary structure, homotrimer.

It carries out the reaction a UDP-3-O-[(3R)-3-hydroxyacyl]-alpha-D-glucosamine + a (3R)-hydroxyacyl-[ACP] = a UDP-2-N,3-O-bis[(3R)-3-hydroxyacyl]-alpha-D-glucosamine + holo-[ACP] + H(+). It participates in bacterial outer membrane biogenesis; LPS lipid A biosynthesis. Its function is as follows. Catalyzes the N-acylation of UDP-3-O-acylglucosamine using 3-hydroxyacyl-ACP as the acyl donor. Is involved in the biosynthesis of lipid A, a phosphorylated glycolipid that anchors the lipopolysaccharide to the outer membrane of the cell. The chain is UDP-3-O-acylglucosamine N-acyltransferase from Trichormus variabilis (strain ATCC 29413 / PCC 7937) (Anabaena variabilis).